Consider the following 67-residue polypeptide: Protein AaeX (67 aa).

2 helical membrane-spanning segments follow: residues 3–23 and 47–67; these read LFPVIVVFGLSFPPIFFELLL and PALFNTALYCCLFYLISRLFV.

The protein belongs to the AaeX family.

It localises to the cell membrane. The protein is Protein AaeX of Escherichia coli O157:H7.